The chain runs to 148 residues: Transcription antitermination protein NusB (148 aa).

This sequence belongs to the NusB family.

Involved in transcription antitermination. Required for transcription of ribosomal RNA (rRNA) genes. Binds specifically to the boxA antiterminator sequence of the ribosomal RNA (rrn) operons. The chain is Transcription antitermination protein NusB from Aquifex aeolicus (strain VF5).